A 419-amino-acid chain; its full sequence is MQGLLILSVLLGAALGKEDFVGHQVLRITAADEAEVQTVKELEDLEHLQLDFWRGPGQPGSPIDVRVPFPSLQAVKVFLEAHGIRYRIMIEDVQSLLDEEQEQMFASQSRARSTNTFNYATYHTLDEIYDFMDLLVAEHPQLVSKLQIGRSYEGRPIYVLKFSTGGSNRPAIWIDLGIHSREWITQATGVWFAKKFTEDYGQDPSFTAILDSMDIFLEIVTNPDGFAFTHSQNRLWRKTRSVTSSSLCVGVDANRNWDAGFGKAGASSSPCSETYHGKYANSEVEVKSIVDFVKDHGNFKAFLSIHSYSQLLLYPYGYTTQSIPDKTELNQVAKSAVEALKSLYGTSYKYGSIITTIYQASGGSIDWSYNQGIKYSFTFELRDTGRYGFLLPASQIIPTAQETWLGVLTIMEHTLNNLY.

A signal peptide spans 1-16 (MQGLLILSVLLGAALG). A propeptide spans 17 to 110 (KEDFVGHQVL…QEQMFASQSR (94 aa)) (activation peptide). The Peptidase M14 domain occupies 121-414 (TYHTLDEIYD…LGVLTIMEHT (294 aa)). Residues H179 and E182 each coordinate Zn(2+). Substrate contacts are provided by residues 179-182 (HSRE), R237, and 254-255 (NR). A disulfide bond links C248 and C271. Residue H306 coordinates Zn(2+). Substrate-binding positions include 307-308 (SY) and Y358. E380 functions as the Proton donor/acceptor in the catalytic mechanism.

Belongs to the peptidase M14 family. In terms of assembly, monomer. May form a complex with proelastase 2. Requires Zn(2+) as cofactor. In terms of tissue distribution, pancreas.

Its subcellular location is the secreted. The catalysed reaction is Release of a C-terminal amino acid, but little or no action with -Asp, -Glu, -Arg, -Lys or -Pro.. It catalyses the reaction leukotriene C4 + H2O = leukotriene F4 + glycine. Its activity is regulated as follows. Inhibited by interaction with the S.magnifica carboxypeptidase inhibitor SmCI. Functionally, carboxypeptidase that catalyzes the release of a C-terminal amino acid, but has little or no action with -Asp, -Glu, -Arg, -Lys or -Pro. Catalyzes the conversion of leukotriene C4 to leukotriene F4 via the hydrolysis of an amide bond. This Bos taurus (Bovine) protein is Carboxypeptidase A1 (CPA1).